Reading from the N-terminus, the 490-residue chain is Glutamyl-tRNA(Gln) amidotransferase subunit A (490 aa).

Active-site charge relay system residues include Lys-78 and Ser-159. The Acyl-ester intermediate role is filled by Ser-183.

This sequence belongs to the amidase family. GatA subfamily. In terms of assembly, heterotrimer of A, B and C subunits.

The enzyme catalyses L-glutamyl-tRNA(Gln) + L-glutamine + ATP + H2O = L-glutaminyl-tRNA(Gln) + L-glutamate + ADP + phosphate + H(+). Allows the formation of correctly charged Gln-tRNA(Gln) through the transamidation of misacylated Glu-tRNA(Gln) in organisms which lack glutaminyl-tRNA synthetase. The reaction takes place in the presence of glutamine and ATP through an activated gamma-phospho-Glu-tRNA(Gln). The protein is Glutamyl-tRNA(Gln) amidotransferase subunit A of Paramagnetospirillum magneticum (strain ATCC 700264 / AMB-1) (Magnetospirillum magneticum).